The primary structure comprises 342 residues: N-acetyl-gamma-glutamyl-phosphate reductase (342 aa).

Residue Cys147 is part of the active site.

The protein belongs to the NAGSA dehydrogenase family. Type 1 subfamily.

The protein localises to the cytoplasm. The enzyme catalyses N-acetyl-L-glutamate 5-semialdehyde + phosphate + NADP(+) = N-acetyl-L-glutamyl 5-phosphate + NADPH + H(+). It participates in amino-acid biosynthesis; L-arginine biosynthesis; N(2)-acetyl-L-ornithine from L-glutamate: step 3/4. In terms of biological role, catalyzes the NADPH-dependent reduction of N-acetyl-5-glutamyl phosphate to yield N-acetyl-L-glutamate 5-semialdehyde. This chain is N-acetyl-gamma-glutamyl-phosphate reductase, found in Campylobacter jejuni (strain RM1221).